We begin with the raw amino-acid sequence, 277 residues long: MADQRPLMTWLEANNYESFLQEDIFSFLDQSLFVDPHSSFIDPFKDFQTQNWFSLQDSIVNHISTTFAADHTFLASLDLEAISSTFSLDISSGWWNENNGNYNNQVEPNLDEISRTNTMGDPNMEQILHEDVNTMKEKTSQKRIIMKRRYREDGVINNMSREMMKQYFYMPITKAAKELNIGVTLLKKRCRELGIPRWPHRKLTSLNALIANLKDLLGNTKGRTPKSKLRNALELLEMEKKMIEEVPDLEFGDKTKRLRQACFKAKYKRRRLFSSSS.

The RWP-RK domain maps to 142–226; sequence KRIIMKRRYR…LGNTKGRTPK (85 aa). Residues 201 to 246 are a coiled coil; it reads RKLTSLNALIANLKDLLGNTKGRTPKSKLRNALELLEMEKKMIEEV.

It localises to the nucleus. Its function is as follows. Putative transcription factor. The polypeptide is Protein RKD3 (RKD3) (Arabidopsis thaliana (Mouse-ear cress)).